Reading from the N-terminus, the 719-residue chain is Putative ankyrin repeat protein RBE_0319 (719 aa).

ANK repeat units lie at residues 377–406 (VAEELLFTATYYQNINIIKQIIETKIEISS), 408–438 (TLIKALYINFTSDNKEILDYLLSFKGLNINE), 442–472 (NGGTLLDYAITFNKLDIVKKLLSHENIEVNK), 476–506 (YGFTILEQAINDDKLEIVKLLLSCKSLEINQ), 510–540 (YQTTPLQQAINGDKLEIVKLLLSHPDIKFNE), 544–572 (LGYTSLDWVIICNKLEIFKVLMPHLDINQ), 576–605 (DGYTPLEWSIYNSYEVFQTLLLRPDINVNE), 609–639 (HGLTPLQLAIIDHNDQMIQALLSHKNIEVSE), and 642–672 (QYGTPLELVINNSNDTALKLLLSHPKINLNK).

This Rickettsia bellii (strain RML369-C) protein is Putative ankyrin repeat protein RBE_0319.